Consider the following 168-residue polypeptide: Cilia- and flagella-associated protein 276 (168 aa).

Disordered stretches follow at residues 35–61 (AHLAQQQDPWSRLSSTPTATSRSRDTF) and 149–168 (HTAATNGGYSRKNDGGFFST). Polar residues predominate over residues 38–55 (AQQQDPWSRLSSTPTATS).

Microtubule inner protein component of sperm flagellar doublet microtubules. Predominantly expressed in nervous system tissues, such as the spinal cord, cerebrum, cerebellum, and sciatic nerve.

It localises to the cytoplasm. The protein resides in the cytoskeleton. It is found in the cilium axoneme. Its subcellular location is the flagellum axoneme. Its function is as follows. Microtubule inner protein (MIP) part of the dynein-decorated doublet microtubules (DMTs) in cilia axoneme, which is required for motile cilia beating. May play an important role for the maintenance of myelin-axon integrity. May affect intracellular Ca(2+) homeostasis. This is Cilia- and flagella-associated protein 276 from Mus musculus (Mouse).